A 134-amino-acid chain; its full sequence is MIFSMLRKLPKVTCRDVLPEIRAICIEEIGCWMQSYSTSFLTDSYLKYIGWTLHDKHREVRVKCVKALKGLYGNRDLTARLELFTGCFKDWMVSMIMDREYSVAVEAVRLLILILKNMEGVLMDVDCESVYPIV.

The SCD domain maps to 10-95; the sequence is PKVTCRDVLP…GCFKDWMVSM (86 aa).

This sequence belongs to the SCC3 family.

It localises to the nucleus. The sequence is that of STAG3-like protein 3 (STAG3L3) from Homo sapiens (Human).